Here is a 291-residue protein sequence, read N- to C-terminus: uncharacterized protein (291 aa).

A run of 4 helical transmembrane segments spans residues 13 to 33 (IILI…SITI), 84 to 104 (IVLF…IGII), 111 to 131 (LLHL…FIII), and 219 to 239 (LIYC…IYYL).

The protein localises to the cell membrane. This is an uncharacterized protein from Ureaplasma parvum serovar 3 (strain ATCC 700970).